The primary structure comprises 81 residues: Gamma-conotoxin-like TxMEKL-0511 (81 aa).

An N-terminal signal peptide occupies residues 1–19 (MEKLTILLLVAAVLLSIQA). Positions 20–45 (LNQEKHQRAKINLLSKRKPPAERWWR) are excised as a propeptide. 3 disulfides stabilise this stretch: Cys49-Cys63, Cys56-Cys67, and Cys62-Cys72.

The protein belongs to the conotoxin O2 superfamily. In terms of tissue distribution, expressed by the venom duct.

The protein localises to the secreted. In terms of biological role, gamma-conotoxins may act on voltage-gated non-specific cation pacemaker channels (HCN). In Conus textile (Cloth-of-gold cone), this protein is Gamma-conotoxin-like TxMEKL-0511.